The sequence spans 203 residues: Large ribosomal subunit protein bL25 (203 aa).

This sequence belongs to the bacterial ribosomal protein bL25 family. CTC subfamily. In terms of assembly, part of the 50S ribosomal subunit; part of the 5S rRNA/L5/L18/L25 subcomplex. Contacts the 5S rRNA. Binds to the 5S rRNA independently of L5 and L18.

Functionally, this is one of the proteins that binds to the 5S RNA in the ribosome where it forms part of the central protuberance. The polypeptide is Large ribosomal subunit protein bL25 (Cellvibrio japonicus (strain Ueda107) (Pseudomonas fluorescens subsp. cellulosa)).